A 155-amino-acid polypeptide reads, in one-letter code: Xanthine-guanine phosphoribosyltransferase (155 aa).

5-phospho-alpha-D-ribose 1-diphosphate-binding positions include 37–38 (RG) and 91–99 (DDLVDTGNT). Asp92 is a binding site for Mg(2+). Asp95 and Ile138 together coordinate guanine. Xanthine-binding residues include Asp95 and Ile138. Residues 95-99 (DTGNT) and 137-138 (WI) each bind GMP.

It belongs to the purine/pyrimidine phosphoribosyltransferase family. XGPT subfamily. As to quaternary structure, homotetramer. The cofactor is Mg(2+).

It localises to the cell inner membrane. The enzyme catalyses GMP + diphosphate = guanine + 5-phospho-alpha-D-ribose 1-diphosphate. The catalysed reaction is XMP + diphosphate = xanthine + 5-phospho-alpha-D-ribose 1-diphosphate. It catalyses the reaction IMP + diphosphate = hypoxanthine + 5-phospho-alpha-D-ribose 1-diphosphate. It functions in the pathway purine metabolism; GMP biosynthesis via salvage pathway; GMP from guanine: step 1/1. It participates in purine metabolism; XMP biosynthesis via salvage pathway; XMP from xanthine: step 1/1. Acts on guanine, xanthine and to a lesser extent hypoxanthine. In terms of biological role, purine salvage pathway enzyme that catalyzes the transfer of the ribosyl-5-phosphate group from 5-phospho-alpha-D-ribose 1-diphosphate (PRPP) to the N9 position of the 6-oxopurines guanine and xanthine to form the corresponding ribonucleotides GMP (guanosine 5'-monophosphate) and XMP (xanthosine 5'-monophosphate), with the release of PPi. To a lesser extent, also acts on hypoxanthine. In Haemophilus influenzae (strain ATCC 51907 / DSM 11121 / KW20 / Rd), this protein is Xanthine-guanine phosphoribosyltransferase.